A 358-amino-acid polypeptide reads, in one-letter code: Ornithine cyclodeaminase (358 aa).

The L-ornithine site is built by R52 and K76. Residues T91, R119, 146–147 (AQ), D168, T208, 231–234 (VGGD), K238, and S299 each bind NAD(+). An L-ornithine-binding site is contributed by R119. D234 is an L-ornithine binding site. D234 (proton donor/acceptor) is an active-site residue. L-ornithine is bound at residue V300.

This sequence belongs to the ornithine cyclodeaminase/mu-crystallin family. NAD(+) is required as a cofactor.

It carries out the reaction L-ornithine = L-proline + NH4(+). The protein operates within amino-acid biosynthesis; L-proline biosynthesis; L-proline from L-ornithine: step 1/1. Its function is as follows. Catalyzes the conversion of L-ornithine into L-proline with release of ammonia. In Brucella suis biovar 1 (strain 1330), this protein is Ornithine cyclodeaminase.